Reading from the N-terminus, the 581-residue chain is Arginine--tRNA ligase (581 aa).

A 'HIGH' region motif is present at residues 122-132; that stretch reads PNVAKPMHVGH.

The protein belongs to the class-I aminoacyl-tRNA synthetase family. As to quaternary structure, monomer.

The protein localises to the cytoplasm. It catalyses the reaction tRNA(Arg) + L-arginine + ATP = L-arginyl-tRNA(Arg) + AMP + diphosphate. The polypeptide is Arginine--tRNA ligase (Francisella tularensis subsp. novicida (strain U112)).